The chain runs to 246 residues: Probable transcriptional regulatory protein YebC (246 aa).

The interval M1–K20 is disordered.

The protein belongs to the TACO1 family.

It localises to the cytoplasm. This chain is Probable transcriptional regulatory protein YebC, found in Salmonella typhimurium (strain LT2 / SGSC1412 / ATCC 700720).